Here is a 441-residue protein sequence, read N- to C-terminus: Transcription factor bHLH90 (441 aa).

A bHLH domain is found at 260-309 (NFKSKNLHSERKRRERINQAMYGLRAVVPKITKLNKIGIFSDAVDYINEL).

As to quaternary structure, homodimer. As to expression, expressed constitutively in roots, leaves, stems, and flowers.

It is found in the nucleus. The polypeptide is Transcription factor bHLH90 (BHLH90) (Arabidopsis thaliana (Mouse-ear cress)).